Here is a 624-residue protein sequence, read N- to C-terminus: Bifunctional 3'-phosphoadenosine 5'-phosphosulfate synthase 1 (624 aa).

At methionine 1 the chain carries N-acetylmethionine. The interval methionine 1–isoleucine 225 is adenylyl-sulfate kinase. At lysine 12 the chain carries N6-acetyllysine. Glycine 62–threonine 67 is an ATP binding site. Residues aspartate 89–arginine 92, phenylalanine 101, arginine 106–asparagine 109, isoleucine 132–serine 133, lysine 171, and glycine 184–phenylalanine 185 contribute to the adenosine 5'-phosphosulfate site. ATP-binding positions include cysteine 207, cysteine 212, glutamine 419 to asparagine 422, glycine 521 to alanine 525, and alanine 563. The sulfate adenylyltransferase stretch occupies residues valine 234–alanine 624.

The protein in the N-terminal section; belongs to the APS kinase family. This sequence in the C-terminal section; belongs to the sulfate adenylyltransferase family. In terms of assembly, homodimer.

It catalyses the reaction sulfate + ATP + H(+) = adenosine 5'-phosphosulfate + diphosphate. It carries out the reaction adenosine 5'-phosphosulfate + ATP = 3'-phosphoadenylyl sulfate + ADP + H(+). The protein operates within sulfur metabolism; sulfate assimilation. In terms of biological role, bifunctional enzyme with both ATP sulfurylase and APS kinase activity, which mediates two steps in the sulfate activation pathway. The first step is the transfer of a sulfate group to ATP to yield adenosine 5'-phosphosulfate (APS), and the second step is the transfer of a phosphate group from ATP to APS yielding 3'-phosphoadenylylsulfate (PAPS: activated sulfate donor used by sulfotransferase). In mammals, PAPS is the sole source of sulfate; APS appears to be only an intermediate in the sulfate-activation pathway. Required for normal biosynthesis of sulfated L-selectin ligands in endothelial cells. In Cavia porcellus (Guinea pig), this protein is Bifunctional 3'-phosphoadenosine 5'-phosphosulfate synthase 1 (PAPSS1).